The sequence spans 488 residues: Annexin A7 (488 aa).

Residues 1–18 (MSYPGYPPTGYPPFPGYP) are compositionally biased toward pro residues. Disordered regions lie at residues 1-49 (MSYP…YPQV) and 71-143 (GYPG…PTYP). A repeat-rich region region spans residues 1–143 (MSYPGYPPTG…QYPGGQPTYP (143 aa)). Residues 5-20 (GYPPTGYPPFPGYPPA) are 3 X 5 AA tandem repeats of G-Y-P-P-X. The span at 89–102 (PGQGFGVPPGGAGF) shows a compositional bias: gly residues. 4 Annexin repeats span residues 185–256 (FDAI…ALFM), 257–328 (PPTY…SMCQ), 340–412 (QMAQ…TILQ), and 416–487 (NRPA…AIVG). The residue at position 233 (Lys233) is an N6-acetyllysine.

This sequence belongs to the annexin family. As to quaternary structure, interacts with PDCD6. Isoform 1 is expressed in brain, heart and skeletal muscle. Isoform 2 is more abundant in liver, lung, kidney, spleen, fibroblasts and placenta.

Functionally, calcium/phospholipid-binding protein which promotes membrane fusion and is involved in exocytosis. The sequence is that of Annexin A7 (ANXA7) from Homo sapiens (Human).